Reading from the N-terminus, the 288-residue chain is Diaminopimelate epimerase (288 aa).

Residues Asn-14 and Asn-67 each contribute to the substrate site. Cys-76 functions as the Proton donor in the catalytic mechanism. Substrate-binding positions include 77–78, Asn-166, Asn-199, and 217–218; these read GN and ER. Cys-226 functions as the Proton acceptor in the catalytic mechanism. 227 to 228 is a substrate binding site; that stretch reads GT.

Belongs to the diaminopimelate epimerase family. Homodimer.

The protein localises to the cytoplasm. The enzyme catalyses (2S,6S)-2,6-diaminopimelate = meso-2,6-diaminopimelate. It functions in the pathway amino-acid biosynthesis; L-lysine biosynthesis via DAP pathway; DL-2,6-diaminopimelate from LL-2,6-diaminopimelate: step 1/1. Catalyzes the stereoinversion of LL-2,6-diaminopimelate (L,L-DAP) to meso-diaminopimelate (meso-DAP), a precursor of L-lysine and an essential component of the bacterial peptidoglycan. The sequence is that of Diaminopimelate epimerase from Bacillus thuringiensis (strain Al Hakam).